The sequence spans 202 residues: Myosin regulatory light chain 10 (202 aa).

The tract at residues 1-21 is disordered; sequence MGQSSLDHGVQGPVAGTGDFG. 3 consecutive EF-hand domains span residues 60-95, 130-165, and 166-201; these read SQIQ…LGRI, DPEE…QADR, and FSEE…GEEK. Residues D73, N75, D77, and D84 each coordinate Ca(2+).

In terms of assembly, myosin is a hexamer of 2 heavy chains and 4 light chains. In terms of tissue distribution, specifically expressed in precursor B- and T-lymphocytes.

The chain is Myosin regulatory light chain 10 (Myl10) from Mus musculus (Mouse).